We begin with the raw amino-acid sequence, 499 residues long: Centrosomal protein of 57 kDa (499 aa).

The span at 1–16 (MAAASVSAASDSQFSS) shows a compositional bias: low complexity. Residues 1 to 41 (MAAASVSAASDSQFSSVLAEPSRSNGNMVHHSSSPYVLYPP) form a disordered region. Residues 22-35 (SRSNGNMVHHSSSP) show a composition bias toward polar residues. Serine 53 carries the post-translational modification Phosphoserine. Residues 58-239 (TFAYPESNSR…RAAELQSGIE (182 aa)) are centrosome localization domain (CLD). Residues 63–242 (ESNSRAIFSA…ELQSGIEANR (180 aa)) are a coiled coil. Disordered stretches follow at residues 255 to 275 (TSTR…GFRN) and 424 to 476 (LEKQ…SRKN). The interval 278 to 490 (GAQPHYRLCL…KDMQTLQNSL (213 aa)) is mediates interaction with microtubules. Residues 388–491 (PSEELKDNLE…DMQTLQNSLQ (104 aa)) adopt a coiled-coil conformation. Basic and acidic residues predominate over residues 427–443 (QSTDKQKELKGNKKTLD). The segment covering 448–458 (SSSRSSVITRT) has biased composition (low complexity). The segment covering 460 to 474 (SKKDFTKQRPGEKSR) has biased composition (basic and acidic residues).

Belongs to the translokin family. In terms of assembly, homodimer and homooligomer. Interacts with FGF2 and RAP80. Does not interact with FGF1 or FGF2 isoform 24 kDa. Interacts with microtubules. In terms of tissue distribution, ubiquitous (at protein level).

It localises to the nucleus. Its subcellular location is the cytoplasm. The protein resides in the cytoskeleton. The protein localises to the microtubule organizing center. It is found in the centrosome. In terms of biological role, centrosomal protein which may be required for microtubule attachment to centrosomes. May act by forming ring-like structures around microtubules. Mediates nuclear translocation and mitogenic activity of the internalized growth factor FGF2. This Rattus norvegicus (Rat) protein is Centrosomal protein of 57 kDa (Cep57).